The sequence spans 504 residues: Maturase K (504 aa).

This sequence belongs to the intron maturase 2 family. MatK subfamily.

It is found in the plastid. Its subcellular location is the chloroplast. Functionally, usually encoded in the trnK tRNA gene intron. Probably assists in splicing its own and other chloroplast group II introns. The protein is Maturase K of Prionotes cerinthoides (Climbing heath).